Consider the following 701-residue polypeptide: Elongation factor G 1 (701 aa).

The tr-type G domain maps to 5-281 (SKYRNIGIFA…AVVDYLPSPT (277 aa)). GTP contacts are provided by residues 14–21 (AHVDAGKT), 78–82 (DTPGH), and 132–135 (NKLD).

The protein belongs to the TRAFAC class translation factor GTPase superfamily. Classic translation factor GTPase family. EF-G/EF-2 subfamily.

Its subcellular location is the cytoplasm. Catalyzes the GTP-dependent ribosomal translocation step during translation elongation. During this step, the ribosome changes from the pre-translocational (PRE) to the post-translocational (POST) state as the newly formed A-site-bound peptidyl-tRNA and P-site-bound deacylated tRNA move to the P and E sites, respectively. Catalyzes the coordinated movement of the two tRNA molecules, the mRNA and conformational changes in the ribosome. This chain is Elongation factor G 1, found in Colwellia psychrerythraea (strain 34H / ATCC BAA-681) (Vibrio psychroerythus).